The following is a 77-amino-acid chain: Phytosulfokines 5 (77 aa).

Positions M1–A24 are cleaved as a signal peptide. A propeptide spanning residues R25–D68 is cleaved from the precursor. Sulfotyrosine occurs at positions 69 and 71. A propeptide spanning residues N74 to P77 is cleaved from the precursor.

It belongs to the phytosulfokine family. In terms of processing, sulfation is important for activity and for the binding to a putative membrane receptor. PSK-beta is an enzymatic derivative of PSK-alpha. Expressed in stems, roots, mature leaves and flowers. Most abundant in vascular bundles.

It localises to the secreted. Its function is as follows. Promotes plant cell differentiation, organogenesis and somatic embryogenesis as well as cell proliferation. May be involved in the low quiescent center cell proliferation. This is Phytosulfokines 5 (PSK5) from Arabidopsis thaliana (Mouse-ear cress).